Here is a 374-residue protein sequence, read N- to C-terminus: Probable phosphoserine aminotransferase (374 aa).

Arg48 contacts L-glutamate. Residues 82-83 (AS), Trp110, Thr160, Asp183, and Gln206 each bind pyridoxal 5'-phosphate. N6-(pyridoxal phosphate)lysine is present on Lys207. 248-249 (NT) is a pyridoxal 5'-phosphate binding site.

It belongs to the class-V pyridoxal-phosphate-dependent aminotransferase family. SerC subfamily. In terms of assembly, homodimer. Requires pyridoxal 5'-phosphate as cofactor.

It catalyses the reaction O-phospho-L-serine + 2-oxoglutarate = 3-phosphooxypyruvate + L-glutamate. The enzyme catalyses 4-(phosphooxy)-L-threonine + 2-oxoglutarate = (R)-3-hydroxy-2-oxo-4-phosphooxybutanoate + L-glutamate. The protein operates within amino-acid biosynthesis; L-serine biosynthesis; L-serine from 3-phospho-D-glycerate: step 2/3. Its pathway is cofactor biosynthesis; pyridoxine 5'-phosphate biosynthesis; pyridoxine 5'-phosphate from D-erythrose 4-phosphate: step 3/5. In terms of biological role, catalyzes the reversible conversion of 3-phosphohydroxypyruvate to phosphoserine and of 3-hydroxy-2-oxo-4-phosphonooxybutanoate to phosphohydroxythreonine. This is Probable phosphoserine aminotransferase (serC) from Dictyostelium discoideum (Social amoeba).